The chain runs to 98 residues: MNEERLTKVILAPVISEKSTLVGEKHNQVIFKILSDADKREVKQAVELLFDVKVTKVHTALVKGKRKRSGRYIGRRSNWKKAYVALQEGYEIDFASVE.

This sequence belongs to the universal ribosomal protein uL23 family. Part of the 50S ribosomal subunit. Contacts protein L29, and trigger factor when it is bound to the ribosome.

In terms of biological role, one of the early assembly proteins it binds 23S rRNA. One of the proteins that surrounds the polypeptide exit tunnel on the outside of the ribosome. Forms the main docking site for trigger factor binding to the ribosome. The chain is Large ribosomal subunit protein uL23 from Nitrosococcus oceani (strain ATCC 19707 / BCRC 17464 / JCM 30415 / NCIMB 11848 / C-107).